Consider the following 461-residue polypeptide: V-type ATP synthase beta chain 1 (461 aa).

Belongs to the ATPase alpha/beta chains family.

In terms of biological role, produces ATP from ADP in the presence of a proton gradient across the membrane. The V-type beta chain is a regulatory subunit. The chain is V-type ATP synthase beta chain 1 from Clostridium tetani (strain Massachusetts / E88).